Here is a 486-residue protein sequence, read N- to C-terminus: Protein DETOXIFICATION 27 (486 aa).

Residues 1–25 (MRGGDGEEGSESRVALLKSPHTAEE) are disordered. Transmembrane regions (helical) follow at residues 41–61 (LWQI…MLVI), 74–94 (LAAI…LLLG), 124–144 (IVLF…TPVL), 153–173 (IAEL…AFTL), 189–209 (VTAY…WLFV), 216–236 (VVGT…ILLV), 269–289 (GVML…TGNL), 299–319 (LSIC…FFAG), 349–369 (IIGL…AWIF), 384–404 (LLLA…GVAV), 407–427 (GWQS…GVPL), and 439–461 (VMGI…LSFI).

This sequence belongs to the multi antimicrobial extrusion (MATE) (TC 2.A.66.1) family.

It is found in the membrane. The chain is Protein DETOXIFICATION 27 from Arabidopsis thaliana (Mouse-ear cress).